The primary structure comprises 209 residues: Ribonuclease HII (209 aa).

The RNase H type-2 domain maps to Asp20–Ile209. 3 residues coordinate a divalent metal cation: Asp26, Glu27, and Asp122.

This sequence belongs to the RNase HII family. It depends on Mn(2+) as a cofactor. The cofactor is Mg(2+).

The protein localises to the cytoplasm. It catalyses the reaction Endonucleolytic cleavage to 5'-phosphomonoester.. Functionally, endonuclease that specifically degrades the RNA of RNA-DNA hybrids. This Prochlorococcus marinus subsp. pastoris (strain CCMP1986 / NIES-2087 / MED4) protein is Ribonuclease HII.